We begin with the raw amino-acid sequence, 34 residues long: Photosystem II reaction center protein M (34 aa).

The helical transmembrane segment at 5–25 (ILALIAIALFISVPTAFLIII) threads the bilayer.

It belongs to the PsbM family. In terms of assembly, PSII is composed of 1 copy each of membrane proteins PsbA, PsbB, PsbC, PsbD, PsbE, PsbF, PsbH, PsbI, PsbJ, PsbK, PsbL, PsbM, PsbT, PsbX, PsbY, PsbZ, Psb30/Ycf12, at least 3 peripheral proteins of the oxygen-evolving complex and a large number of cofactors. It forms dimeric complexes.

Its subcellular location is the plastid. It localises to the chloroplast thylakoid membrane. In terms of biological role, one of the components of the core complex of photosystem II (PSII). PSII is a light-driven water:plastoquinone oxidoreductase that uses light energy to abstract electrons from H(2)O, generating O(2) and a proton gradient subsequently used for ATP formation. It consists of a core antenna complex that captures photons, and an electron transfer chain that converts photonic excitation into a charge separation. This subunit is found at the monomer-monomer interface. In Gnetum parvifolium (Small-leaved jointfir), this protein is Photosystem II reaction center protein M.